The following is a 181-amino-acid chain: Large ribosomal subunit protein uL6 (181 aa).

The protein belongs to the universal ribosomal protein uL6 family. As to quaternary structure, part of the 50S ribosomal subunit.

In terms of biological role, this protein binds to the 23S rRNA, and is important in its secondary structure. It is located near the subunit interface in the base of the L7/L12 stalk, and near the tRNA binding site of the peptidyltransferase center. The polypeptide is Large ribosomal subunit protein uL6 (Desulforudis audaxviator (strain MP104C)).